A 382-amino-acid chain; its full sequence is ATP phosphoribosyltransferase regulatory subunit (382 aa).

It belongs to the class-II aminoacyl-tRNA synthetase family. HisZ subfamily. Heteromultimer composed of HisG and HisZ subunits.

It localises to the cytoplasm. Its pathway is amino-acid biosynthesis; L-histidine biosynthesis; L-histidine from 5-phospho-alpha-D-ribose 1-diphosphate: step 1/9. In terms of biological role, required for the first step of histidine biosynthesis. May allow the feedback regulation of ATP phosphoribosyltransferase activity by histidine. The sequence is that of ATP phosphoribosyltransferase regulatory subunit from Burkholderia vietnamiensis (strain G4 / LMG 22486) (Burkholderia cepacia (strain R1808)).